A 341-amino-acid chain; its full sequence is ATPase GET3 (341 aa).

ATP is bound at residue 34 to 41 (KGGVGKTT). Residue D63 is part of the active site. ATP contacts are provided by E245 and N272. Residues C283 and C286 each coordinate Zn(2+).

The protein belongs to the arsA ATPase family. As to quaternary structure, homodimer.

Its subcellular location is the cytoplasm. The protein resides in the endoplasmic reticulum. In terms of biological role, ATPase required for the post-translational delivery of tail-anchored (TA) proteins to the endoplasmic reticulum. Recognizes and selectively binds the transmembrane domain of TA proteins in the cytosol. This complex then targets to the endoplasmic reticulum by membrane-bound receptors, where the tail-anchored protein is released for insertion. This process is regulated by ATP binding and hydrolysis. ATP binding drives the homodimer towards the closed dimer state, facilitating recognition of newly synthesized TA membrane proteins. ATP hydrolysis is required for insertion. Subsequently, the homodimer reverts towards the open dimer state, lowering its affinity for the membrane-bound receptor, and returning it to the cytosol to initiate a new round of targeting. This is ATPase GET3 from Paracoccidioides lutzii (strain ATCC MYA-826 / Pb01) (Paracoccidioides brasiliensis).